We begin with the raw amino-acid sequence, 137 residues long: Large ribosomal subunit protein uL16 (137 aa).

A compositionally biased stretch (basic residues) spans 1-17; sequence MLQPKRTKFRKQMKGRN. The segment at 1–22 is disordered; that stretch reads MLQPKRTKFRKQMKGRNRGLAQ.

This sequence belongs to the universal ribosomal protein uL16 family. In terms of assembly, part of the 50S ribosomal subunit.

Functionally, binds 23S rRNA and is also seen to make contacts with the A and possibly P site tRNAs. In Teredinibacter turnerae (strain ATCC 39867 / T7901), this protein is Large ribosomal subunit protein uL16.